Consider the following 297-residue polypeptide: 4,5-DOPA dioxygenase extradiol-like protein (297 aa).

Zn(2+) is bound by residues His-30, His-82, His-205, and His-263.

This sequence belongs to the DODA-type extradiol aromatic ring-opening dioxygenase family. The cofactor is Zn(2+).

The protein localises to the cytoplasm. It is found in the nucleus. Its function is as follows. May be involved in the metabolism of aromatic compounds. This chain is 4,5-DOPA dioxygenase extradiol-like protein, found in Schizosaccharomyces pombe (strain 972 / ATCC 24843) (Fission yeast).